The following is a 481-amino-acid chain: 2-methylisoborneol synthase (481 aa).

Disordered stretches follow at residues 1–125 (MPDS…PVGP) and 139–160 (QAAV…GPVV). A compositionally biased stretch (pro residues) spans 11 to 23 (TSLPEQPPAPPAT). Low complexity predominate over residues 24–33 (APDAPAATVT). 2 stretches are compositionally biased toward pro residues: residues 52–64 (VTRP…PSMP) and 71–104 (SSPP…PPAT). Low complexity predominate over residues 105 to 114 (APETSAATGS). The Mg(2+) site is built by Asp238, Asp239, Glu243, Asn386, Ser390, and Glu394.

This sequence belongs to the terpene synthase family. 2-methylisoborneol synthase subfamily. Mg(2+) serves as cofactor.

The enzyme catalyses (E)-2-methylgeranyl diphosphate + H2O = 2-methylisoborneol + diphosphate. Catalyzes the cyclization of 2-methylgeranyl diphosphate (2-MeGPP) to 2-methylisoborneol (2-MIB), which likely involves the intermediacy of 2-methyllinalyl diphosphate. The chain is 2-methylisoborneol synthase (tpc) from Streptomyces lasalocidi (Streptomyces lasaliensis).